Consider the following 610-residue polypeptide: MCGIVGATSERRVTGILLEGLKRLEYRGYDSAGVAVIDADNHLKSVRRTGKVQELKDAIEQNPLDGTIGIAHTRWATHGGVTEANAHPHRSEDEIAVVHNGIIENHERLREELQAEGYVFNSQTDTEVIAHLIHHERKTHGDLLAAVKSAVRQLEGAYGTVVMDTQYPERLVVARSGSPLVIGVGIGENFVASDQLALLPVTRQFIYLEEGDVADINRTEIDIYDSEGNAVEREVVESDVSYDAGGKGQYRHFMLKEIYEQPIAVRNTLEGRLSEISVLDNAFGENAADILKDIEHVQIVACGTSYHAGMVARYWLESMANVSCNVEIASEFRYRKSYVHPNSLLVTISQSGETADTLAALRLSKKLGYKGSLTICNVGSSSMVRESDLAFLTRAGAEIGVASTKAFTTQLTGLLMLTLGIGKYRGMPEQQQEAVVHALQALPTKLEEAVSLADEIEELAQDFANKEHSLFLGRGNQYPIAMEGALKLKEISYIHAEAYAAGELKHGPLALIDEEMPVIVVAPNNDLLEKLKSNVEEVRARGGLMYVFADKNARFKGDDSLTVLNVCHCDEVIAPIVYTVPLQLLSYYVALIKGTDVDQPRNLAKSVTVE.

Catalysis depends on cysteine 2, which acts as the Nucleophile; for GATase activity. In terms of domain architecture, Glutamine amidotransferase type-2 spans 2 to 219 (CGIVGATSER…EGDVADINRT (218 aa)). 2 SIS domains span residues 287 to 427 (AADI…YRGM) and 459 to 600 (LAQD…VDQP). Lysine 605 acts as the For Fru-6P isomerization activity in catalysis.

Homodimer.

It is found in the cytoplasm. It catalyses the reaction D-fructose 6-phosphate + L-glutamine = D-glucosamine 6-phosphate + L-glutamate. Its function is as follows. Catalyzes the first step in hexosamine metabolism, converting fructose-6P into glucosamine-6P using glutamine as a nitrogen source. The polypeptide is Glutamine--fructose-6-phosphate aminotransferase [isomerizing] (Idiomarina loihiensis (strain ATCC BAA-735 / DSM 15497 / L2-TR)).